A 73-amino-acid polypeptide reads, in one-letter code: MKEGIHPKYNEITVKCLCGNSFESRSTKAEISTEVCSQCHPFYTGKQKLMDTAGRVERFRKRYNIAAAPTEES.

Zn(2+) contacts are provided by C16, C18, C36, and C39.

This sequence belongs to the bacterial ribosomal protein bL31 family. Type A subfamily. Part of the 50S ribosomal subunit. Requires Zn(2+) as cofactor.

Its function is as follows. Binds the 23S rRNA. The sequence is that of Large ribosomal subunit protein bL31 from Citrifermentans bemidjiense (strain ATCC BAA-1014 / DSM 16622 / JCM 12645 / Bem) (Geobacter bemidjiensis).